Reading from the N-terminus, the 468-residue chain is MMYFVISAMKAQIEIIPCKICGDKSSGIHYGVITCEGCKGFFRRSQQSNAAYSCPRQKNCLIDRTSRNRCQHCRLQKCLAVGMSRDAVKFGRMSKKQRDSLYAEVQKHRLQQQQRDHQQQPGEAEPLTPTYGLSTNGLTELHDDLSGYMNGHTPDGTKPDSGVSSFYLDIQPSPDQSGLDINGIKPEPICDFTPGSGFFPYCSFTNGETSPTVSMAELEHLAQNISKSHMETCQYLREELQQMTWQAFLQEEVENYQSKPREVMWQLCAIKITEAIQYVVEFAKRIDGFMELCQNDQIVLLKAGSLEVVFVRMCRAFDPQNNTVYFDGKYAGPDVFKSLGCDDLISSVFEFGKNLCSMHLSEDEIALFSAFVLMSADRSWLQEKVKVEKLQQKIQLALQHVLQKNHREDGILTKLICKVSTLRALCSRHTEKLTAFKAIYPDIVRAHFPPLYKELFGSDFEQSMPVDG.

Positions Ile-15–Phe-90 form a DNA-binding region, nuclear receptor. NR C4-type zinc fingers lie at residues Cys-18–Cys-38 and Cys-54–Cys-73. Disordered stretches follow at residues Leu-101–Pro-129 and His-142–Val-163. Residues Glu-217 to Leu-455 enclose the NR LBD domain. An AF-2 region spans residues Val-444–Leu-455.

This sequence belongs to the nuclear hormone receptor family. NR1 subfamily. Expressed in the brain, in cerebellar-like structures, including Purkinje cells.

Its subcellular location is the nucleus. Functionally, nuclear receptor that binds DNA as a monomer to ROR response elements (RORE). Required for proper cerebellum development. The polypeptide is Nuclear receptor ROR-alpha A (roraa) (Danio rerio (Zebrafish)).